The chain runs to 372 residues: Putative glutamate--cysteine ligase 2 (372 aa).

Belongs to the glutamate--cysteine ligase type 2 family. YbdK subfamily. Homodimer.

The catalysed reaction is L-cysteine + L-glutamate + ATP = gamma-L-glutamyl-L-cysteine + ADP + phosphate + H(+). Functionally, ATP-dependent carboxylate-amine ligase which exhibits weak glutamate--cysteine ligase activity. This Escherichia coli (strain K12 / MC4100 / BW2952) protein is Putative glutamate--cysteine ligase 2 (ybdK).